The sequence spans 366 residues: Alanine racemase (366 aa).

The active-site Proton acceptor; specific for D-alanine is the Lys40. Lys40 carries the post-translational modification N6-(pyridoxal phosphate)lysine. Arg136 contributes to the substrate binding site. The active-site Proton acceptor; specific for L-alanine is the Tyr263. A substrate-binding site is contributed by Met310.

The protein belongs to the alanine racemase family. Pyridoxal 5'-phosphate is required as a cofactor.

The catalysed reaction is L-alanine = D-alanine. Its pathway is amino-acid biosynthesis; D-alanine biosynthesis; D-alanine from L-alanine: step 1/1. Its function is as follows. Catalyzes the interconversion of L-alanine and D-alanine. May also act on other amino acids. In Streptococcus pyogenes serotype M5 (strain Manfredo), this protein is Alanine racemase (alr).